The primary structure comprises 328 residues: Tryptophan--tRNA ligase (328 aa).

Residues 9–11 (QPS) and 17–18 (GN) each bind ATP. The 'HIGH' region signature appears at 10 to 18 (PSGVITIGN). An L-tryptophan-binding site is contributed by aspartate 132. ATP is bound by residues 144–146 (GED), isoleucine 183, and 192–196 (KMSKS). The 'KMSKS' region motif lies at 192-196 (KMSKS).

It belongs to the class-I aminoacyl-tRNA synthetase family. As to quaternary structure, homodimer.

The protein resides in the cytoplasm. It carries out the reaction tRNA(Trp) + L-tryptophan + ATP = L-tryptophyl-tRNA(Trp) + AMP + diphosphate + H(+). Inhibited by indolmycin, a competitive inhibitor for tryptophan. Catalyzes the attachment of tryptophan to tRNA(Trp). This is Tryptophan--tRNA ligase from Geobacillus stearothermophilus (Bacillus stearothermophilus).